The sequence spans 178 residues: N-alpha-acetyltransferase 20 (178 aa).

Residues 2–157 (TTLRAFTCDD…DAYDMRKALS (156 aa)) enclose the N-acetyltransferase domain.

Belongs to the acetyltransferase family. ARD1 subfamily. Component of the N-terminal acetyltransferase B (NatB) complex which is composed of naa20 and naa25.

It is found in the cytoplasm. The protein localises to the nucleus. It catalyses the reaction N-terminal L-methionyl-L-asparaginyl-[protein] + acetyl-CoA = N-terminal N(alpha)-acetyl-L-methionyl-L-asparaginyl-[protein] + CoA + H(+). It carries out the reaction N-terminal L-methionyl-L-glutaminyl-[protein] + acetyl-CoA = N-terminal N(alpha)-acetyl-L-methionyl-L-glutaminyl-[protein] + CoA + H(+). The catalysed reaction is N-terminal L-methionyl-L-aspartyl-[protein] + acetyl-CoA = N-terminal N(alpha)-acetyl-L-methionyl-L-aspartyl-[protein] + CoA + H(+). The enzyme catalyses N-terminal L-methionyl-L-glutamyl-[protein] + acetyl-CoA = N-terminal N(alpha)-acetyl-L-methionyl-L-glutamyl-[protein] + CoA + H(+). Its function is as follows. Catalytic subunit of the NatB complex which catalyzes acetylation of the N-terminal methionine residues of peptides beginning with Met-Asp, Met-Glu, Met-Asn and Met-Gln. Proteins with cell cycle functions are overrepresented in the pool of NatB substrates. Required for maintaining the structure and function of actomyosin fibers and for proper cellular migration. The chain is N-alpha-acetyltransferase 20 (naa20) from Danio rerio (Zebrafish).